The chain runs to 780 residues: ATP-dependent 6-phosphofructokinase, muscle type (780 aa).

An N-acetylthreonine modification is found at Thr-2. Positions 2–390 (THEEHHAAKT…NWEVYKLLAH (389 aa)) are N-terminal catalytic PFK domain 1. Residues Gly-25, 88–89 (RC), and 118–121 (GDGS) contribute to the ATP site. Asp-119 contacts Mg(2+). A Phosphoserine modification is found at Ser-133. Substrate-binding positions include 164–166 (SID), Arg-201, 208–210 (MGR), Glu-264, Arg-292, and 298–301 (HVQR). The active-site Proton acceptor is the Asp-166. Ser-377 bears the Phosphoserine mark. The segment at 391-401 (VRPPVSKGGLH) is interdomain linker. The tract at residues 402-780 (TVAVMNVGAP…SRKRSGEAAV (379 aa)) is C-terminal regulatory PFK domain 2. Beta-D-fructose 2,6-bisphosphate-binding positions include Arg-471 and 528–532 (TVSNN). O-linked (GlcNAc) serine glycosylation is present at Ser-530. The residue at position 557 (Lys-557) is an N6-(2-hydroxyisobutyryl)lysine. Residues Arg-566, 573-575 (MGG), Glu-629, Arg-655, and 661-664 (HMQQ) contribute to the beta-D-fructose 2,6-bisphosphate site. Ser-667 carries the phosphoserine modification. A beta-D-fructose 2,6-bisphosphate-binding site is contributed by Arg-735. Ser-775 carries the post-translational modification Phosphoserine.

The protein belongs to the phosphofructokinase type A (PFKA) family. ATP-dependent PFK group I subfamily. Eukaryotic two domain clade 'E' sub-subfamily. In terms of assembly, homo- and heterotetramers. Phosphofructokinase (PFK) enzyme functions as a tetramer composed of different combinations of 3 types of subunits, called PFKM (M), PFKL (L) and PFKP (P). The composition of the PFK tetramer differs according to the tissue type it is present in. The kinetic and regulatory properties of the tetrameric enzyme are dependent on the subunit composition, hence can vary across tissues. Isoform 2 and isoform 3 interact (via N-terminal testis-specific region) with GSTM5. Isoform 2 and isoform 3 interact (via C-terminus) with HK1 (via N-terminal spermatogenic cell-specific region). Requires Mg(2+) as cofactor. GlcNAcylation decreases enzyme activity. In terms of tissue distribution, isoform 1 is expressed in skeletal muscle (at protein level). Isoform 2 and isoform 3 are testis-specific and are detected in quiescent sperm (at protein level). They are first detected in the cytoplasm of round spermatids and subsequently in the flagellum of elongated spermatids extending into the seminiferous tubule lumen (at protein level). Isoform 2 is expressed at higher level than isoform 3 in testis.

Its subcellular location is the cytoplasm. It localises to the cell projection. The protein resides in the cilium. The protein localises to the flagellum. The catalysed reaction is beta-D-fructose 6-phosphate + ATP = beta-D-fructose 1,6-bisphosphate + ADP + H(+). Its pathway is carbohydrate degradation; glycolysis; D-glyceraldehyde 3-phosphate and glycerone phosphate from D-glucose: step 3/4. With respect to regulation, allosterically activated by ADP, AMP, or fructose 2,6-bisphosphate, and allosterically inhibited by ATP or citrate. Catalyzes the phosphorylation of D-fructose 6-phosphate to fructose 1,6-bisphosphate by ATP, the first committing step of glycolysis. The chain is ATP-dependent 6-phosphofructokinase, muscle type (Pfkm) from Mus musculus (Mouse).